Reading from the N-terminus, the 1486-residue chain is MIVRSLLLAGSLLLASVVPASFTLAKSDGPQIKVKEFDKVPTDVHYFEDTDTIILSGKKAELYISTDAAASWNLLEGKSGILYPNKYHTQSAVIYGPNRKHWVTFDAAKTWREFEVPDKLVYGGGFMPFTFHGKDAEKVLISAEECQFMTCRHVTYYTTDGFKTVKRLFEGDMGCFWAVGNPAFGEGEPHLPDKLDDRVFCIWPHATPLDLTRRLVYSDTYFSDRKAVAVEAGGRDIKGVNNMASVKKFLILAASSVGTSEAAIYVSKDAVHWDRADFYGGPKVRGGKFTVLESTNYSIQVNVASRRSRVPIGSLFTSDSTGTSFTMNLDGVNEDKDMITDFEQVSGIQGIFLVNIVENAEEVKKGATREKKLVSRISFDDGRTFKPLKCGDKELHLHSITRPSNIGRTYSSPAPGLVMGIGNTGDKLGTYETGDTFVSNDAGVTWRKALDKAHKYEFGDQGSLLVAVFDEYKDKIFTDEISYSLNHGKDWKKAKLPHRVTALQLTTTPDSTSLQFLLVAEDEKKKFYVMSIDFSDIHERKCEKKDFERWPARLDEKGEPDCLMGHKQFYRRRKADADCFVKEKFKEPLPETEPCQCTKEDFECAAGFLRNKDYECEPHRKVSPPEGKCKNPDDKFMGPSGYRLIPGDDCLKKGGVDLEKEVERTCKDATKAPVSGQISVEKTPFKTKNLNYRYLERSDTSSGDDETVILKTDDGDLFVTRDHGKTWQRGKFKEPISLYIPHKYDNDVIYLLTEGKKAYWSIDRAHTFHSFEGKLPITRTLGTLPLYFHPDHPDWLIWIGGQDCKGKKCTDLAYYSKNRGDEWDLLLRGVGKCMFVGKEGELTADDLIFCSQHEHEDPSKSLRLISSDDMFTKKTSVHFDGKPIVGYAKMSEFIVVATKNGTELSSFTSVDGKTFAHAAFPPNYHIDAEYAYTVLDSSTHSIFLHVTDHPAKMHEFGSILKSNSNGTSYVLSLPNANRNDRDYVDFEKIQVVEGVALANIVINPDEVKAKGQEKKFRSLITHNDGSEWALLSPPKKDVEGKNFDCKVKDKGTDDCALHLHGFTERRENRDSMSSGSAVGLIIGVGNVGSSLTPRAESDTYMSRDAGITWHQIKKGRYQWEFGDQGSIVVVVAEEKPTKVLSYSLDEGETWTDFEFSDKEVTVEDISTVPSDTSRNFILWCRPGSSNEIVAYNVDFSGLKEREKQCVLKKESPEADDYYLWSPKHPMQKDNCLFGHVSMYHRKRPEAKCYNGPKLDRLSGEKKNCQCTRQDYECDYNYERQSDGSCALVKGLKPADPMQICKDDPEAIEYFEPTGYRKLPVSTCEGGHQLDHLVARPCPNKKKEFDEKHPGIGGFGLFFAIFFPVAIATGVGYWAFSKWDGKFGRIRLGESQPESIFSRDSPLISVPVTIVAGTVAVITALPLLFSSLWRSFRGYTRLPGSWWGQRQRPYASRGAFAARRGEYVGVVDDEDELLGAEEFEGDEEEDV.

The signal sequence occupies residues 1-25; that stretch reads MIVRSLLLAGSLLLASVVPASFTLA. The Lumenal portion of the chain corresponds to 26-1349; sequence KSDGPQIKVK…KKKEFDEKHP (1324 aa). Residue Asn296 is glycosylated (N-linked (GlcNAc...) asparagine). BNR repeat units lie at residues 377–386, 437–447, 483–493, and 718–728; these read ISFDDGRTFK, FVSNDAGVTWR, YSLNHGKDWKK, and FVTRDHGKTWQ. N-linked (GlcNAc...) asparagine glycosylation is found at Asn900 and Asn965. 2 BNR repeats span residues 1100–1110 and 1142–1151; these read YMSRDAGITWH and YSLDEGETWT. A helical transmembrane segment spans residues 1350–1370; the sequence is GIGGFGLFFAIFFPVAIATGV. Residues 1371–1401 lie on the Cytoplasmic side of the membrane; sequence GYWAFSKWDGKFGRIRLGESQPESIFSRDSP. A helical transmembrane segment spans residues 1402–1422; it reads LISVPVTIVAGTVAVITALPL. Residues 1423–1486 are Lumenal-facing; sequence LFSSLWRSFR…EFEGDEEEDV (64 aa).

This sequence belongs to the VPS10-related sortilin family.

The protein localises to the golgi apparatus. It localises to the trans-Golgi network membrane. It is found in the prevacuolar compartment membrane. In terms of biological role, functions as a sorting receptor in the Golgi compartment required for the intracellular sorting and delivery of soluble vacuolar proteins, like carboxypeptidase Y (CPY) and proteinase A. Executes multiple rounds of sorting by cycling between the late Golgi and a prevacuolar endosome-like compartment. The protein is Vacuolar protein sorting/targeting protein 10 (VPS10) of Arthroderma benhamiae (strain ATCC MYA-4681 / CBS 112371) (Trichophyton mentagrophytes).